We begin with the raw amino-acid sequence, 465 residues long: Cysteine--tRNA ligase (465 aa).

Residue C27 participates in Zn(2+) binding. Positions 29-39 (PTVYNFFHIGN) match the 'HIGH' region motif. Positions 207, 232, and 236 each coordinate Zn(2+). The short motif at 264–268 (KMSKS) is the 'KMSKS' region element. K267 lines the ATP pocket.

This sequence belongs to the class-I aminoacyl-tRNA synthetase family. As to quaternary structure, monomer. It depends on Zn(2+) as a cofactor.

It is found in the cytoplasm. It carries out the reaction tRNA(Cys) + L-cysteine + ATP = L-cysteinyl-tRNA(Cys) + AMP + diphosphate. The polypeptide is Cysteine--tRNA ligase (Clostridium botulinum (strain Kyoto / Type A2)).